The following is a 58-amino-acid chain: Transactivator protein ORF121 (58 aa).

In terms of biological role, stimulates the expression of 39k gene most probably by increasing IE1 expression. The chain is Transactivator protein ORF121 (AC121) from Lepidoptera (butterflies and moths).